Consider the following 353-residue polypeptide: UPF0283 membrane protein YcjF (353 aa).

Residues 1-19 (MSEPLKPRIDFAEPLKEES) show a composition bias toward basic and acidic residues. Residues 1 to 29 (MSEPLKPRIDFAEPLKEESTSTFKAQQTF) are disordered. The segment covering 20–29 (TSTFKAQQTF) has biased composition (polar residues). 3 helical membrane passes run 70-90 (MVLGGLALFGASVVGQGIQWT), 100-120 (AALGGCAAGALIIGAGVGSVI), and 213-233 (ESTLMIAVSPLALVDMAFIAW).

It belongs to the UPF0283 family.

Its subcellular location is the cell inner membrane. The protein is UPF0283 membrane protein YcjF of Salmonella arizonae (strain ATCC BAA-731 / CDC346-86 / RSK2980).